The chain runs to 256 residues: Hemin import ATP-binding protein HmuV (256 aa).

The region spanning 2–238 is the ABC transporter domain; it reads ISAQNLVYSL…QALTMLYGAD (237 aa). Residue 34–41 participates in ATP binding; that stretch reads GPNGAGKS.

The protein belongs to the ABC transporter superfamily. Heme (hemin) importer (TC 3.A.1.14.5) family. As to quaternary structure, the complex is composed of two ATP-binding proteins (HmuV), two transmembrane proteins (HmuU) and a solute-binding protein (HmuT).

It localises to the cell inner membrane. Its function is as follows. Part of the ABC transporter complex HmuTUV involved in hemin import. Responsible for energy coupling to the transport system. The polypeptide is Hemin import ATP-binding protein HmuV (Shigella dysenteriae serotype 1 (strain Sd197)).